A 2498-amino-acid chain; its full sequence is Nuclear receptor corepressor 1 (2498 aa).

Disordered regions lie at residues 1–38, 54–84, 134–169, and 198–223; these read MSSS…QQEY, IQQQ…SGYD, SEVK…SKLS, and QQQL…VEQK. 3 stretches are compositionally biased toward basic and acidic residues: residues 71–82, 134–148, and 204–213; these read PVSDRPQDRRSG, SEVK…KHES, and EAAKPPEPEK. Positions 154–304 are interaction with tbl1xr1-A; it reads SGQPGDDQDA…REQNICQRYD (151 aa). Residues 168–208 adopt a coiled-coil conformation; the sequence is LSKEELIQSMDRVDREIAKVEQQILKLKKKQQQLEEEAAKP. Residues 427–478 form the SANT 1 domain; sequence QFMNVWTDHEKEIFKEKFVRHPKNFGLIASYLERKNVSDCVLYYYLTKKNEN. Residues 483-493 are compositionally biased toward basic residues; the sequence is VRRNYPKRRGR. 7 disordered regions span residues 483-649, 668-912, 1075-1122, 1417-1436, 1470-1583, 1737-1851, and 1916-1990; these read VRRN…GSKS, NLLQ…FGSR, SLSD…GTPG, DLVS…IMEG, SWGV…QRES, PGTQ…AQES, and PQME…TAHT. 2 stretches are compositionally biased toward basic and acidic residues: residues 502–525 and 535–548; these read SQEE…KEDE and KEEL…KIDA. Residues 502 to 552 are a coiled coil; it reads SQEEKEIEKVEEEKADRNDKKEDERREEEEKEEKEELREGAKDKIDAVAED. The span at 582-611 shows a compositional bias: low complexity; the sequence is ASEAAAANAVTTATTAPVTTTSTATTVAPV. The span at 612-627 shows a compositional bias: pro residues; sequence PVAPPPEEPTPPPPPQ. The region spanning 628 to 665 is the SANT 2 domain; that stretch reads EQSLVDHGRNWGAIAKMVGSKSESQCKNFYFNYKRRHN. Residues 689–699 show a composition bias toward polar residues; sequence QCDSIASTVSA. The segment covering 700–719 has biased composition (acidic residues); the sequence is QEDDENEASNEEENPEDSEG. 2 stretches are compositionally biased toward low complexity: residues 727–738 and 761–774; these read ESAPSPSPAEAA and DAAS…SPSP. A compositionally biased stretch (basic and acidic residues) spans 854–863; the sequence is MERLMDRAEA. Polar residues-rich tracts occupy residues 872 to 891 and 1102 to 1122; these read QNIS…SATC and ATSS…GTPG. Residues 1484-1501 show a composition bias toward basic and acidic residues; it reads KMGERSKHEDTKSSDAIR. The segment covering 1505–1516 has biased composition (polar residues); it reads TSVVSSGPSVLR. Residues 1545 to 1558 are compositionally biased toward low complexity; it reads PSPMSRSSPMARSA. A coiled-coil region spans residues 1765-1804; the sequence is VSAERERERERERERDREREKEQRERESDRERERDRLAHA. Residues 1767–1802 show a composition bias toward basic and acidic residues; it reads AERERERERERERDREREKEQRERESDRERERDRLA. Low complexity-rich tracts occupy residues 1803–1813 and 1820–1835; these read HAAAAAAAASA and RPVS…RPSS. A compositionally biased stretch (polar residues) spans 1842–1851; that stretch reads PSPSVRAQES. Residues 1921-1942 are compositionally biased toward basic and acidic residues; that stretch reads AKPKESKNDSARSEENLSRRNA. The span at 1958-1980 shows a compositional bias: low complexity; that stretch reads SPYTSSSFSSSKSQSQPSSAVYS. The CORNR box 1 motif lies at 2012 to 2016; that stretch reads IDVII. Residues 2022-2109 form a disordered region; that stretch reads SDKDGRERNS…SPPQQTIPGH (88 aa). Low complexity predominate over residues 2031–2040; that stretch reads SQSSDASSSH. A compositionally biased stretch (basic and acidic residues) spans 2043–2052; the sequence is HRYEAPRETI. The segment covering 2093–2106 has biased composition (polar residues); sequence RYRQQQESPPQQTI. The CORNR box 2 motif lies at 2123 to 2127; sequence ICHII. The span at 2136 to 2145 shows a compositional bias: low complexity; that stretch reads PVNQPLQQPP. A disordered region spans residues 2136-2222; it reads PVNQPLQQPP…PISPPQAPML (87 aa). Polar residues predominate over residues 2146–2175; sequence ASTFQSTNPTSTAVRTKASSRFSPESQVQP. Basic and acidic residues predominate over residues 2190–2209; that stretch reads IPDKPRGRPGKSPDRGHISE. A CORNR box 3 motif is present at residues 2326–2330; the sequence is LEDII. Disordered stretches follow at residues 2344-2446 and 2464-2498; these read DHGV…YNPL and TSMT…DSDE. The span at 2353–2362 shows a compositional bias: polar residues; sequence QGNQSGTPNS. The span at 2380–2394 shows a compositional bias: basic residues; that stretch reads HKQKLISKYGSRKTK. Composition is skewed to polar residues over residues 2464 to 2476 and 2489 to 2498; these read TSMT…QQSR and QYETLSDSDE.

Belongs to the N-CoR nuclear receptor corepressors family. As to quaternary structure, forms a large corepressor complex that contains sin3a/b, histone deacetylases hdac1 and hdac2, rbbp4 and possibly rbbp7. Interacts with the thyroid receptor (TR, composed of rxra and thrb) and the retinoid acid receptor (RAR, composed of rxra and rara) in the absence of ligand. Interacts with tbl1xr1-A and possibly tbl1xr1-B. Interacts with zbtb33/kaiso.

It is found in the nucleus. Functionally, mediates transcriptional repression by certain nuclear receptors. Participates in complexes which promote histone deacetylation and the formation of repressive chromatin structures which may impede access by the basal transcription machinery. In association with hdac3, may play a role in the regulation of the circadian clock. The polypeptide is Nuclear receptor corepressor 1 (ncor1) (Xenopus laevis (African clawed frog)).